The following is a 173-amino-acid chain: Ribosome maturation factor RimM (173 aa).

Positions 94–168 (SNESYLCDLL…LIRINPPKGL (75 aa)) constitute a PRC barrel domain.

This sequence belongs to the RimM family. As to quaternary structure, binds ribosomal protein uS19.

It localises to the cytoplasm. In terms of biological role, an accessory protein needed during the final step in the assembly of 30S ribosomal subunit, possibly for assembly of the head region. Essential for efficient processing of 16S rRNA. May be needed both before and after RbfA during the maturation of 16S rRNA. It has affinity for free ribosomal 30S subunits but not for 70S ribosomes. The protein is Ribosome maturation factor RimM of Lawsonia intracellularis (strain PHE/MN1-00).